Consider the following 187-residue polypeptide: GTP cyclohydrolase 1 (187 aa).

3 residues coordinate Zn(2+): Cys-81, His-84, and Cys-152.

It belongs to the GTP cyclohydrolase I family. In terms of assembly, toroid-shaped homodecamer, composed of two pentamers of five dimers.

It catalyses the reaction GTP + H2O = 7,8-dihydroneopterin 3'-triphosphate + formate + H(+). The protein operates within cofactor biosynthesis; 7,8-dihydroneopterin triphosphate biosynthesis; 7,8-dihydroneopterin triphosphate from GTP: step 1/1. In Pyrobaculum aerophilum (strain ATCC 51768 / DSM 7523 / JCM 9630 / CIP 104966 / NBRC 100827 / IM2), this protein is GTP cyclohydrolase 1.